The chain runs to 980 residues: Thrombospondin-4 (980 aa).

The signal sequence occupies residues 1–42 (MTMITPSSKLTLTKGNKSWSSTRCGAFLLLHLVLQPWQRAGA). One can recognise a Laminin G-like domain in the interval 43-210 (QATPQVFDLL…LEELKLVVRG (168 aa)). Residues 304 to 343 (PTRRCDSSPCFRGVRCTDTRDGFQCGPCPDGYTGNGITCS) form the EGF-like 1 domain. 21 cysteine pairs are disulfide-bonded: Cys-308–Cys-319, Cys-313–Cys-328, Cys-331–Cys-342, Cys-348–Cys-359, Cys-353–Cys-368, Cys-371–Cys-395, Cys-401–Cys-412, Cys-406–Cys-421, Cys-424–Cys-436, Cys-442–Cys-456, Cys-450–Cys-466, Cys-468–Cys-480, Cys-496–Cys-501, Cys-506–Cys-526, Cys-542–Cys-562, Cys-565–Cys-585, Cys-601–Cys-621, Cys-624–Cys-644, Cys-662–Cys-682, Cys-702–Cys-722, and Cys-738–Cys-959. Residues 344–381 (DVDECKYHPCYPGVRCTNLAPGFRCDACPVGFTGPMVQ) enclose the EGF-like 2; calcium-binding domain. An EGF-like 3; calcium-binding domain is found at 397 to 434 (DVDECRNGACVLNSICINTLGSYRCGPCKPGYTGDQTR). In terms of domain architecture, EGF-like 4 spans 438-481 (TERSCRNPEQNPCSVHAQCIEERQGDVTCVCGVGWAGRAGYVCG). 8 TSP type-3 repeats span residues 482–514 (KDVD…NSGQ), 515–550 (EDAD…NVDQ), 551–573 (RNTD…NNDQ), 574–609 (KDTD…NRDQ), 610–632 (QDRD…NPNQ), 633–670 (SDVD…NSAQ), 671–710 (LDTD…NPAQ), and 711–746 (EDSN…EITL). The disordered stretch occupies residues 596-691 (NILDNCPRVP…CDDDDDNDGM (96 aa)). Residues 605–615 (PNRDQQDRDGD) are compositionally biased toward basic and acidic residues. N-linked (GlcNAc...) asparagine glycosylation is present at Asn-631. Residues 659–671 (TDNCPTVINSAQL) are compositionally biased toward polar residues. Positions 679–690 (GDECDDDDDNDG) are enriched in acidic residues. The 215-residue stretch at 750 to 964 (RAYQTVVLDP…LKYRCNDTIP (215 aa)) folds into the TSP C-terminal domain. N-linked (GlcNAc...) asparagine glycosylation is present at Asn-960.

The protein belongs to the thrombospondin family. In terms of assembly, homopentamer; disulfide-linked. Interacts with PTBP3. Interacts (via EGF-like 3; calcium-binding domain) with ATF6 and facilitates its processing, activation and nuclear translocation. Interacts with NOTCH1. In terms of tissue distribution, mainly expressed in astrocytes, and in ressponse to peripheral nerve injury, significantly up-regulated in the dorsal spinal cord (at protein level).

The protein localises to the endoplasmic reticulum. It is found in the sarcoplasmic reticulum. The protein resides in the secreted. Its subcellular location is the extracellular space. It localises to the extracellular matrix. Its function is as follows. Adhesive glycoprotein that mediates cell-to-cell and cell-to-matrix interactions and is involved in various processes including cellular proliferation, migration, adhesion and attachment, inflammatory response to CNS injury, regulation of vascular inflammation and adaptive responses of the heart to pressure overload and in myocardial function and remodeling. Binds to structural extracellular matrix (ECM) proteins and modulates the ECM in response to tissue damage, contributing to cardioprotective and adaptive ECM remodeling. Plays a role in ER stress response, via its interaction with the activating transcription factor 6 alpha (ATF6) which produces adaptive ER stress response factors and protects myocardium from pressure overload. May contribute to spinal presynaptic hypersensitivity and neuropathic pain states after peripheral nerve injury. May play a role in regulating protective astrogenesis from the subventricular zone (SVZ) niche after injury in a NOTCH1-dependent manner. This Rattus norvegicus (Rat) protein is Thrombospondin-4 (Thbs4).